The chain runs to 519 residues: Ribonuclease Y (519 aa).

A helical transmembrane segment spans residues 3 to 23; sequence LMIFAYIAIGAVLGAGTGYLL. Residues 209 to 272 enclose the KH domain; that stretch reads TVTAVTLPSE…QVAKMALERL (64 aa). The 94-residue stretch at 335–428 folds into the HD domain; it reads VLQHSLEVSA…VQAADSISGA (94 aa).

Belongs to the RNase Y family.

It localises to the cell membrane. Functionally, endoribonuclease that initiates mRNA decay. In Nitratidesulfovibrio vulgaris (strain ATCC 29579 / DSM 644 / CCUG 34227 / NCIMB 8303 / VKM B-1760 / Hildenborough) (Desulfovibrio vulgaris), this protein is Ribonuclease Y.